Here is a 130-residue protein sequence, read N- to C-terminus: MTRIKRGYIARKRRTKIRLFTSSFRGAHSRLTRTITQQKIKALVSAHRDRDRKKRDFRGLWISRINAVIRGNIKVYYIYSNLVYSLYTGQLLLNRKIVAQIAILKQNCLFMIANDIIKTKNPLRLYSGKV.

This sequence belongs to the bacterial ribosomal protein bL20 family.

It localises to the plastid. The protein localises to the chloroplast. Functionally, binds directly to 23S ribosomal RNA and is necessary for the in vitro assembly process of the 50S ribosomal subunit. It is not involved in the protein synthesizing functions of that subunit. This chain is Large ribosomal subunit protein bL20c (rpl20), found in Glycine max (Soybean).